The following is a 481-amino-acid chain: Glutamyl-tRNA(Gln) amidotransferase subunit A (481 aa).

Residues Lys76 and Ser151 each act as charge relay system in the active site. Ser175 serves as the catalytic Acyl-ester intermediate.

This sequence belongs to the amidase family. GatA subfamily. As to quaternary structure, heterotrimer of A, B and C subunits.

The enzyme catalyses L-glutamyl-tRNA(Gln) + L-glutamine + ATP + H2O = L-glutaminyl-tRNA(Gln) + L-glutamate + ADP + phosphate + H(+). Functionally, allows the formation of correctly charged Gln-tRNA(Gln) through the transamidation of misacylated Glu-tRNA(Gln) in organisms which lack glutaminyl-tRNA synthetase. The reaction takes place in the presence of glutamine and ATP through an activated gamma-phospho-Glu-tRNA(Gln). The sequence is that of Glutamyl-tRNA(Gln) amidotransferase subunit A from Neisseria gonorrhoeae (strain NCCP11945).